Reading from the N-terminus, the 117-residue chain is Holo-[acyl-carrier-protein] synthase (117 aa).

2 residues coordinate Mg(2+): Asp8 and Glu58.

Belongs to the P-Pant transferase superfamily. AcpS family. Requires Mg(2+) as cofactor.

The protein resides in the cytoplasm. It carries out the reaction apo-[ACP] + CoA = holo-[ACP] + adenosine 3',5'-bisphosphate + H(+). Transfers the 4'-phosphopantetheine moiety from coenzyme A to a Ser of acyl-carrier-protein. This Shouchella clausii (strain KSM-K16) (Alkalihalobacillus clausii) protein is Holo-[acyl-carrier-protein] synthase.